The sequence spans 511 residues: NADH-quinone oxidoreductase subunit N 1 (511 aa).

Transmembrane regions (helical) follow at residues 15–35, 46–66, 89–109, 120–140, 142–162, 177–197, 221–241, 264–284, 289–309, 317–337, 347–367, 393–413, 426–446, and 471–491; these read LALP…LDLV, ALAL…WQAV, FAIY…LMSI, GEYH…ASGM, LILL…LVGF, LLLG…FYGL, PIAL…IAAV, VAVK…MLWP, YTPI…FAAL, LLAY…VASD, GILV…AVIT, AVLL…AGFW, GHYT…YYYL, and AALW…EVFL.

Belongs to the complex I subunit 2 family. In terms of assembly, NDH-1 is composed of 14 different subunits. Subunits NuoA, H, J, K, L, M, N constitute the membrane sector of the complex.

The protein resides in the cell inner membrane. The catalysed reaction is a quinone + NADH + 5 H(+)(in) = a quinol + NAD(+) + 4 H(+)(out). NDH-1 shuttles electrons from NADH, via FMN and iron-sulfur (Fe-S) centers, to quinones in the respiratory chain. The immediate electron acceptor for the enzyme in this species is believed to be ubiquinone. Couples the redox reaction to proton translocation (for every two electrons transferred, four hydrogen ions are translocated across the cytoplasmic membrane), and thus conserves the redox energy in a proton gradient. The sequence is that of NADH-quinone oxidoreductase subunit N 1 from Koribacter versatilis (strain Ellin345).